Consider the following 68-residue polypeptide: U4-agatoxin-Ao1a (68 aa).

The N-terminal stretch at 1–25 is a signal peptide; the sequence is MKKSTVIVLSLAAFVLLSVMQFSAA. Positions 26 to 36 are excised as a propeptide; sequence EDIKMEVEEQR. Disulfide bonds link Cys39–Cys52, Cys46–Cys57, Cys51–Cys66, and Cys59–Cys64.

The protein belongs to the neurotoxin 33 family. As to expression, expressed by the venom gland.

It localises to the secreted. This is U4-agatoxin-Ao1a from Agelena orientalis (Funnel-web spider).